We begin with the raw amino-acid sequence, 426 residues long: Coiled-coil domain-containing protein 86 (426 aa).

Positions 1–426 (MDTPLRRSRR…QPPQRPVAKV (426 aa)) are disordered. A Phosphoserine modification is found at S18. Over residues 33-49 (ALVDFKSNSEETGELKS) the composition is skewed to basic and acidic residues. Residues 55–145 (LSLPSPGPQP…SLPSPGPQPE (91 aa)) are compositionally biased toward pro residues. S59 bears the Phosphoserine mark. T66 carries the post-translational modification Phosphothreonine. S67, S70, S161, S172, S183, S191, S194, S225, S252, S253, and S283 each carry phosphoserine. Positions 241-255 (QPAQELTVQAPSSPE) are enriched in polar residues. The span at 304–320 (GKPKSGRVWKDRSKKRF) shows a compositional bias: basic residues. The segment covering 339 to 383 (ERQERKLAKDFARHLEEEKQRRRQEKKERRAENLRRRLENERKAE) has biased composition (basic and acidic residues). The stretch at 346–389 (AKDFARHLEEEKQRRRQEKKERRAENLRRRLENERKAEIVQVIR) forms a coiled coil. Over residues 392-402 (AKLKKAKKKQL) the composition is skewed to basic residues. Citrulline is present on R408.

Citrullinated by PADI4. In terms of tissue distribution, highly expressed in testis. Also expressed in heart, liver, kidney.

The protein localises to the nucleus. It localises to the chromosome. Its subcellular location is the nucleolus. Required for proper chromosome segregation during mitosis and error-free mitotic progression. This Mus musculus (Mouse) protein is Coiled-coil domain-containing protein 86.